We begin with the raw amino-acid sequence, 892 residues long: Alanine--tRNA ligase (892 aa).

Positions 593, 597, 694, and 698 each coordinate Zn(2+).

This sequence belongs to the class-II aminoacyl-tRNA synthetase family. Zn(2+) serves as cofactor.

It is found in the cytoplasm. The catalysed reaction is tRNA(Ala) + L-alanine + ATP = L-alanyl-tRNA(Ala) + AMP + diphosphate. Its function is as follows. Catalyzes the attachment of alanine to tRNA(Ala) in a two-step reaction: alanine is first activated by ATP to form Ala-AMP and then transferred to the acceptor end of tRNA(Ala). Also edits incorrectly charged Ser-tRNA(Ala) and Gly-tRNA(Ala) via its editing domain. The polypeptide is Alanine--tRNA ligase (Helicobacter hepaticus (strain ATCC 51449 / 3B1)).